The following is a 346-amino-acid chain: uncharacterized protein (346 aa).

Helical transmembrane passes span 15 to 35, 55 to 75, 93 to 113, 139 to 159, 182 to 202, 229 to 249, 269 to 289, and 295 to 315; these read YLRGFALLGIILVNILGLLTV, VEARFYPIFSFLFGVGFYLFI, ILVLFIFGFIHFLFQPGEALT, ILLLFVSIFAAKIFMPLPLIL, IFTFFMFILSVGGLLLQYCYV, LGVATGPILSAFYAGFLLLLL, LTNYISQTALILLAGKLFHLF, and LQSLWLCLAIYVIQLIFSAMW.

This sequence to E.coli YeiB, B.subtilis YxaH and B.subtilis YrkO.

It is found in the cell membrane. Functionally, involved in transport. This is an uncharacterized protein from Bacillus acidopullulyticus.